The sequence spans 434 residues: Calcium uptake protein 2, mitochondrial (434 aa).

A mitochondrion-targeting transit peptide spans 1 to 22 (MAAAAGSCARVAAWGGKLRRGL). The EF-hand 1 domain occupies 172 to 207 (KPHSGFHVAFKMLDTDGNEMIEKREFFKLQKIISKQ). The Ca(2+) site is built by D185, D187, N189, M191, E193, and E196. S205 is modified (phosphoserine). The EF-hand 2; degenerate domain maps to 227–262 (EPEINTTLQMRFFGKRGQRKLHYKEFRRFMENLQTE). Positions 293-328 (TENKDIYWKNVREKLSAGESISLDEFKSFCHFTTHL) constitute an EF-hand 3; degenerate domain. In terms of domain architecture, EF-hand 4 spans 362–397 (LSNNILDTVFKIFDLDGDECLSHEEFLGVLKNRMHR). Positions 375, 377, 379, 381, and 386 each coordinate Ca(2+).

Belongs to the MICU1 family. MICU2 subfamily. As to quaternary structure, heterodimer; disulfide-linked; heterodimerizes with MICU1. Component of the uniplex complex, composed of MCU, EMRE/SMDT1, MICU1 and MICU2 in a 4:4:1:1 stoichiometry.

It localises to the mitochondrion intermembrane space. The protein localises to the mitochondrion inner membrane. Calcium sensor of the mitochondrial calcium uniporter (MCU) channel, which senses calcium level via its EF-hand domains. MICU1 and MICU2 form a disulfide-linked heterodimer that stimulates and inhibits MCU activity, depending on the concentration of calcium. At low calcium levels, MICU1 occludes the pore of the MCU channel, preventing mitochondrial calcium uptake. At higher calcium levels, calcium-binding to MICU1 and MICU2 induces a conformational change that weakens MCU-MICU1 interactions and moves the MICU1-MICU2 heterodimer away from the pore, allowing calcium permeation through the MCU channel. The chain is Calcium uptake protein 2, mitochondrial from Homo sapiens (Human).